Reading from the N-terminus, the 380-residue chain is Dual-specificity RNA methyltransferase RlmN (380 aa).

The Proton acceptor role is filled by E94. The 240-residue stretch at 100–339 folds into the Radical SAM core domain; the sequence is DGDRATLCVS…VTVRKTRGDD (240 aa). C107 and C344 are oxidised to a cystine. C114, C118, and C121 together coordinate [4Fe-4S] cluster. Residues 168-169, S200, 222-224, and N301 each bind S-adenosyl-L-methionine; these read GE and SLH. Catalysis depends on C344, which acts as the S-methylcysteine intermediate.

The protein belongs to the radical SAM superfamily. RlmN family. It depends on [4Fe-4S] cluster as a cofactor.

The protein localises to the cytoplasm. The enzyme catalyses adenosine(2503) in 23S rRNA + 2 reduced [2Fe-2S]-[ferredoxin] + 2 S-adenosyl-L-methionine = 2-methyladenosine(2503) in 23S rRNA + 5'-deoxyadenosine + L-methionine + 2 oxidized [2Fe-2S]-[ferredoxin] + S-adenosyl-L-homocysteine. It catalyses the reaction adenosine(37) in tRNA + 2 reduced [2Fe-2S]-[ferredoxin] + 2 S-adenosyl-L-methionine = 2-methyladenosine(37) in tRNA + 5'-deoxyadenosine + L-methionine + 2 oxidized [2Fe-2S]-[ferredoxin] + S-adenosyl-L-homocysteine. Functionally, specifically methylates position 2 of adenine 2503 in 23S rRNA and position 2 of adenine 37 in tRNAs. m2A2503 modification seems to play a crucial role in the proofreading step occurring at the peptidyl transferase center and thus would serve to optimize ribosomal fidelity. This is Dual-specificity RNA methyltransferase RlmN from Vibrio atlanticus (strain LGP32) (Vibrio splendidus (strain Mel32)).